The sequence spans 75 residues: Large ribosomal subunit protein bL31 (75 aa).

It belongs to the bacterial ribosomal protein bL31 family. Type A subfamily. As to quaternary structure, part of the 50S ribosomal subunit.

Its function is as follows. Binds the 23S rRNA. The chain is Large ribosomal subunit protein bL31 from Nitrobacter winogradskyi (strain ATCC 25391 / DSM 10237 / CIP 104748 / NCIMB 11846 / Nb-255).